The chain runs to 487 residues: Phosphatidylserine synthase 2 (487 aa).

Over residues 1–10 (MRRGERRDAG) the composition is skewed to basic and acidic residues. A disordered region spans residues 1-50 (MRRGERRDAGGPRPESPVPAGRASLEEPPDGPSAGQATGPGEGRRSTESE). At 1–62 (MRRGERRDAG…DDGTNTFFWR (62 aa)) the chain is on the cytoplasmic side. Residues Ser-16 and Ser-24 each carry the phosphoserine modification. Residues 63 to 83 (AHTLTVLFILTCTLGYVTLLE) traverse the membrane as a helical segment. Residues 84–96 (ETPQDTAYNTKRG) are Lumenal-facing. Residues 97–117 (IVASILVFLCFGVTQAKDGPF) form a helical membrane-spanning segment. Residues 118-126 (SRPHPAYWR) lie on the Cytoplasmic side of the membrane. A helical membrane pass occupies residues 127–147 (FWLCVSVVYELFLIFILFQTV). Residues 148–313 (QDGRQFLKYV…EWKPASSLRR (166 aa)) lie on the Lumenal side of the membrane. Asn-181 carries N-linked (GlcNAc...) asparagine glycosylation. A helical membrane pass occupies residues 314–334 (WLAVCGIILVFLLAELNTFYL). Lys-335 is a topological domain (cytoplasmic). A helical membrane pass occupies residues 336-356 (FVLWMPPEHYLVLLRLVFFVN). Residues 357-376 (VGGVAMREIYDFMDDPKPHK) are Lumenal-facing. Residues 377–397 (KLGPQAWLVAAITATELLIVV) traverse the membrane as a helical segment. Residues 398 to 403 (KYDPHT) are Cytoplasmic-facing. A helical membrane pass occupies residues 404–424 (LTLSLPFYISQCWTLGSVLAL). Residues 425 to 487 (TWTVWRFFLR…AEGEGAPTPN (63 aa)) are Lumenal-facing. Positions 451–487 (KDDQGSTVGNGDQHPLGLDEDLLGPGVAEGEGAPTPN) are disordered. At Thr-485 the chain carries Phosphothreonine.

This sequence belongs to the phosphatidyl serine synthase family.

The protein localises to the endoplasmic reticulum membrane. It catalyses the reaction a 1,2-diacyl-sn-glycero-3-phosphoethanolamine + L-serine = a 1,2-diacyl-sn-glycero-3-phospho-L-serine + ethanolamine. It carries out the reaction 1-hexadecanoyl-2-(9Z-octadecenoyl)-sn-glycero-3-phosphoethanolamine + L-serine = 1-hexadecanoyl-2-(9Z-octadecenoyl)-sn-glycero-3-phospho-L-serine + ethanolamine. The catalysed reaction is 1-hexadecanoyl-2-(4Z,7Z,10Z,13Z,16Z,19Z-docosahexaenoyl)-sn-glycero-3-phosphoethanolamine + L-serine = 1-hexadecanoyl-2-(4Z,7Z,10Z,13Z,16Z,19Z-docosahexaenoyl)-sn-glycero-3-phosphoserine + ethanolamine. The enzyme catalyses 1-octadecanoyl-2-(5Z,8Z,11Z,14Z)-eicosatetraenoyl-sn-glycero-3-phosphoethanolamine + L-serine = 1-octadecanoyl-2-(5Z,8Z,11Z,14Z)-eicosatetraenoyl-sn-glycero-3-phosphoserine + ethanolamine. It catalyses the reaction 1-octadecanoyl-2-(4Z,7Z,10Z,13Z,16Z,19Z-docosahexaenoyl)-sn-glycero-3-phosphoethanolamine + L-serine = 1-octadecanoyl-2-(4Z,7Z,10Z,13Z,16Z,19Z-docosahexaenoyl)-sn-glycero-3-phosphoserine + ethanolamine. It carries out the reaction 1-(1Z-octadecenyl)-2-(4Z,7Z,10Z,13Z,16Z,19Z-docosahexaenoyl)-sn-glycero-3-phosphoethanolamine + L-serine = 1-(1Z-octadecenyl)-2-(4Z,7Z,10Z,13Z,16Z,19Z-docosahexaenoyl)-sn-glycero-3-phospho-L-serine + ethanolamine. The catalysed reaction is 1-octadecanoyl-2-(9Z-octadecenoyl)-sn-glycero-3-phosphoethanolamine + L-serine = 1-octadecanoyl-2-(9Z-octadecenoyl)-sn-glycero-3-phospho-L-serine + ethanolamine. The enzyme catalyses 1-(1Z-octadecenyl)-2-(9Z-octadecenoyl)-sn-glycero-3-phosphoethanolamine + L-serine = 1-(1Z-octadecenyl)-2-(9Z-octadecenoyl)-sn-glycero-3-phospho-L-serine + ethanolamine. It catalyses the reaction 1-(1Z-octadecenyl)-2-(5Z,8Z,11Z,14Z- eicosatetraenoyl)-sn-glycero-3-phosphoethanolamine + L-serine = 1-(1Z-octadecenyl)-2-(5Z,8Z,11Z,14Z-eicosatetraenoyl)-sn-glycero-3-phospho-L-serine + ethanolamine. It functions in the pathway phospholipid metabolism; phosphatidylserine biosynthesis. Requires calcium ions. Inhibited by exogenous phosphatidylserine. In terms of biological role, catalyzes a base-exchange reaction in which the polar head group of phosphatidylethanolamine (PE) or phosphatidylcholine (PC) is replaced by L-serine. Catalyzes the conversion of phosphatatidylethanolamine and does not act on phosphatidylcholine. Can utilize both phosphatidylethanolamine (PE) plasmalogen and diacyl PE as substrate and the latter is six times better utilized, indicating the importance of an ester linkage at the sn-1 position. Although it shows no sn-1 fatty acyl preference, exhibits significant preference towards docosahexaenoic acid (22:6n-3) compared with 18:1 or 20:4 at the sn-2 position. The sequence is that of Phosphatidylserine synthase 2 (PTDSS2) from Homo sapiens (Human).